The sequence spans 324 residues: Glyoxylate/hydroxypyruvate reductase B (324 aa).

Catalysis depends on residues Arg237 and Glu266. His285 acts as the Proton donor in catalysis.

It belongs to the D-isomer specific 2-hydroxyacid dehydrogenase family. GhrB subfamily. Homodimer.

The protein resides in the cytoplasm. It carries out the reaction glycolate + NADP(+) = glyoxylate + NADPH + H(+). It catalyses the reaction (R)-glycerate + NAD(+) = 3-hydroxypyruvate + NADH + H(+). The catalysed reaction is (R)-glycerate + NADP(+) = 3-hydroxypyruvate + NADPH + H(+). Its function is as follows. Catalyzes the NADPH-dependent reduction of glyoxylate and hydroxypyruvate into glycolate and glycerate, respectively. The chain is Glyoxylate/hydroxypyruvate reductase B from Salmonella dublin (strain CT_02021853).